The primary structure comprises 152 residues: MSVAASFPKHTSFTMRASFAAADGLPETENNAGEPENTYILRPVFQQRFRPSVVKDCIHAVLKEELANAEYSPEEMPQLTKHLSENIKDKLKEMGFDRYKMVVQVVIGEQRGEGVFMAARCFWDADTDNCTHDVFMNDSLFCVVAAFGCFYY.

Belongs to the dynein light chain Tctex-type family. As to quaternary structure, light chain of the cytoplasmic dynein complex 2, a multisubunit complex composed at least of eleven different proteins. The cytoplasmic dynein 2 complex consists of two catalytic heavy chains (HCs) and a number of non-catalytic subunits presented by intermediate chains (ICs), light intermediate chains (LICs) and light chains (LCs). Among them, a heavy chain (DYNC2H1), two intermediate chains (DYNC2I2 and DYNC2I1), a light intermediate chain (DYNC2LI1), and a light chain (DYNLT2B) are unique to the dynein-2 complex, but a subset of the light chains are also shared by dynein-1 and dynein-2 complexes. The dimer DYNLT2B-DYNLT1/DYNLT3 interacts with DYNC2I1; this interaction is crucial for retrograde trafficking of ciliary proteins.

It is found in the dynein axonemal particle. Functionally, acts as one of several non-catalytic accessory components of the cytoplasmic dynein 2 complex (dynein-2 complex), a motor protein complex that drives the movement of cargos along microtubules within cilia and flagella in concert with the intraflagellar transport (IFT) system. Required for proper retrograde ciliary transport. This Bos taurus (Bovine) protein is Dynein light chain Tctex-type protein 2B (DYNLT2B).